Here is a 136-residue protein sequence, read N- to C-terminus: MPEKMSLRLVPHLACIIFILEIQFRIADSNDPCPHNQGIDEDIAESILGDWPANVDLTSVKRSHKCYVTCILQYYNIVTTSGEIFLDKYYDTGVIDELAVAPKINRCRYEFRMETDYCSRIFAIFNCLRQEILTKS.

The signal sequence occupies residues 1–29 (MPEKMSLRLVPHLACIIFILEIQFRIADS). Intrachain disulfides connect Cys33-Cys70, Cys66-Cys118, and Cys107-Cys127.

This sequence belongs to the PBP/GOBP family.

Functionally, present in the aqueous fluid surrounding olfactory sensory dendrites and are thought to aid in the capture and transport of hydrophobic odorants into and through this fluid. In Drosophila melanogaster (Fruit fly), this protein is General odorant-binding protein 57d.